The sequence spans 316 residues: Apolipoprotein E (316 aa).

The N-terminal stretch at 1 to 18 is a signal peptide; that stretch reads MKVLWVAVVVALLAGCQA. Repeat copies occupy residues 79–100, 101–122, 123–144, 145–166, 167–188, 189–210, 211–232, and 233–254. The 8 X 22 AA approximate tandem repeats stretch occupies residues 79–254; sequence ALMEETMKEV…RLDKIRQQLE (176 aa). Position 142 is a methionine sulfoxide (methionine 142). Serine 146 carries the phosphoserine; by FAM20C modification. The interval 157–167 is LDL and other lipoprotein receptors binding; it reads HLRKLRKRLLR. Position 161–164 (161–164) interacts with heparin; that stretch reads LRKR. The tract at residues 209–289 is lipid-binding and lipoprotein association; the sequence is AATLSTLAGQ…SWFEPLVEDM (81 aa). The O-linked (GalNAc...) threonine glycan is linked to threonine 211. Heparin is bound at residue 228-235; it reads RQKLHGRL. Positions 265 to 316 are homooligomerization; the sequence is NQMRLQAEAFQARLRSWFEPLVEDMQRQWAGLVEKVQLALRPSPTSPPSENH. A specificity for association with VLDL region spans residues 277–289; sequence RLRSWFEPLVEDM.

Belongs to the apolipoprotein A1/A4/E family. As to quaternary structure, homotetramer. May interact with ABCA1; functionally associated with ABCA1 in the biogenesis of HDLs. May interact with APP/A4 amyloid-beta peptide; the interaction is extremely stable in vitro but its physiological significance is unclear. May interact with MAPT. May interact with MAP2. In the cerebrospinal fluid, interacts with secreted SORL1. Interacts with PMEL; this allows the loading of PMEL luminal fragment on ILVs to induce fibril nucleation. In terms of processing, APOE exists as multiple glycosylated and sialylated glycoforms within cells and in plasma. The extent of glycosylation and sialylation are tissue and context specific. Post-translationally, glycated in plasma VLDL. Phosphorylated by FAM20C in the extracellular medium.

The protein localises to the secreted. Its subcellular location is the extracellular space. It localises to the extracellular matrix. The protein resides in the extracellular vesicle. It is found in the endosome. The protein localises to the multivesicular body. In terms of biological role, APOE is an apolipoprotein, a protein associating with lipid particles, that mainly functions in lipoprotein-mediated lipid transport between organs via the plasma and interstitial fluids. APOE is a core component of plasma lipoproteins and is involved in their production, conversion and clearance. Apolipoproteins are amphipathic molecules that interact both with lipids of the lipoprotein particle core and the aqueous environment of the plasma. As such, APOE associates with chylomicrons, chylomicron remnants, very low density lipoproteins (VLDL) and intermediate density lipoproteins (IDL) but shows a preferential binding to high-density lipoproteins (HDL). It also binds a wide range of cellular receptors including the LDL receptor/LDLR and the very low-density lipoprotein receptor/VLDLR that mediate the cellular uptake of the APOE-containing lipoprotein particles. Finally, APOE also has a heparin-binding activity and binds heparan-sulfate proteoglycans on the surface of cells, a property that supports the capture and the receptor-mediated uptake of APOE-containing lipoproteins by cells. This Bos mutus grunniens (Wild yak) protein is Apolipoprotein E (APOE).